The chain runs to 77 residues: Putative defensin-like protein 158 (77 aa).

A signal peptide spans 1-24 (MANISWSHFLILMLVFSVVKKGKG). Intrachain disulfides connect Cys31-Cys77, Cys41-Cys60, Cys46-Cys71, and Cys50-Cys73.

This sequence belongs to the DEFL family.

The protein localises to the secreted. The chain is Putative defensin-like protein 158 (LCR23) from Arabidopsis thaliana (Mouse-ear cress).